The sequence spans 191 residues: Peptidyl-tRNA hydrolase (191 aa).

Tyrosine 17 serves as a coordination point for tRNA. The Proton acceptor role is filled by histidine 22. The tRNA site is built by tyrosine 68, asparagine 70, and asparagine 116.

Belongs to the PTH family. Monomer.

It is found in the cytoplasm. It catalyses the reaction an N-acyl-L-alpha-aminoacyl-tRNA + H2O = an N-acyl-L-amino acid + a tRNA + H(+). In terms of biological role, hydrolyzes ribosome-free peptidyl-tRNAs (with 1 or more amino acids incorporated), which drop off the ribosome during protein synthesis, or as a result of ribosome stalling. Its function is as follows. Catalyzes the release of premature peptidyl moieties from peptidyl-tRNA molecules trapped in stalled 50S ribosomal subunits, and thus maintains levels of free tRNAs and 50S ribosomes. This chain is Peptidyl-tRNA hydrolase, found in Mycobacterium tuberculosis (strain ATCC 25177 / H37Ra).